The chain runs to 464 residues: Mitogen-activated protein kinase 10 (464 aa).

Residues 64–359 form the Protein kinase domain; it reads YQNLKPIGSG…VDDALQHPYI (296 aa). Residues 70–78 and K93 each bind ATP; that span reads IGSGAQGIV. D189 serves as the catalytic Proton acceptor. Residue T221 is modified to Phosphothreonine; by MAP2K7. A TXY motif is present at residues 221–223; that stretch reads TPY. Phosphotyrosine; by MAP2K4 is present on Y223. The interval 405-464 is disordered; the sequence is TKNGVVKGQPSPSGAAVNSSESLPPSSSVNDISSMSTDQTLASDTDSSLEASAGPLGCCR. Low complexity predominate over residues 423-432; it reads SSESLPPSSS. The segment covering 433–454 has biased composition (polar residues); that stretch reads VNDISSMSTDQTLASDTDSSLE. S-palmitoyl cysteine attachment occurs at residues C462 and C463.

Belongs to the protein kinase superfamily. CMGC Ser/Thr protein kinase family. MAP kinase subfamily. As to quaternary structure, interacts with MAPK8IP1/JIP-1 and MAPK8IP3/JIP-3/JSAP1. Interacts with SPAG9/MAPK8IP4/JIP4. Interacts with HDAC9 and MAPKBP1. Interacts with ARRB2; the interaction enhances MAPK10 activation by MAP3K5. Interacts with SARM1. Interacts with JUND; interaction is inhibited in the presence of MEN1. Requires Mg(2+) as cofactor. Post-translationally, dually phosphorylated on Thr-221 and Tyr-223 by MAP2K4 and MAP2K7, which activates the enzyme. MAP2K7 shows a strong preference for Thr-221 while MAP2K4 phosphorylates Tyr-223 preferentially. Weakly autophosphorylated on threonine and tyrosine residues in vitro. In terms of processing, palmitoylation regulates subcellular location and axonal development.

It is found in the cytoplasm. The protein localises to the membrane. Its subcellular location is the nucleus. It localises to the mitochondrion. The catalysed reaction is L-seryl-[protein] + ATP = O-phospho-L-seryl-[protein] + ADP + H(+). The enzyme catalyses L-threonyl-[protein] + ATP = O-phospho-L-threonyl-[protein] + ADP + H(+). Activated by threonine and tyrosine phosphorylation by two dual specificity kinases, MAP2K4 and MAP2K7. MAP2K7 phosphorylates MAPK10 on Thr-221 causing a conformational change and a large increase in Vmax for the enzyme. MAP2K4 then phosphorylates Tyr-223 resulting in a further increase in Vmax. Inhibited by dual specificity phosphatases, such as DUSP1. Inhibited by HDAC9. In terms of biological role, serine/threonine-protein kinase involved in various processes such as neuronal proliferation, differentiation, migration and programmed cell death. Extracellular stimuli such as pro-inflammatory cytokines or physical stress stimulate the stress-activated protein kinase/c-Jun N-terminal kinase (SAP/JNK) signaling pathway. In this cascade, two dual specificity kinases MAP2K4/MKK4 and MAP2K7/MKK7 phosphorylate and activate MAPK10/JNK3. In turn, MAPK10/JNK3 phosphorylates a number of transcription factors, primarily components of AP-1 such as JUN and ATF2 and thus regulates AP-1 transcriptional activity. Plays regulatory roles in the signaling pathways during neuronal apoptosis. Phosphorylates the neuronal microtubule regulator STMN2. Acts in the regulation of the amyloid-beta precursor protein/APP signaling during neuronal differentiation by phosphorylating APP. Also participates in neurite growth in spiral ganglion neurons. Phosphorylates the CLOCK-BMAL1 heterodimer and plays a role in the photic regulation of the circadian clock. Phosphorylates JUND and this phosphorylation is inhibited in the presence of MEN1. The sequence is that of Mitogen-activated protein kinase 10 (Mapk10) from Rattus norvegicus (Rat).